The sequence spans 400 residues: Homoserine O-acetyltransferase (400 aa).

The segment at Met-1 to Asp-22 is disordered. The region spanning Asn-64–Asp-374 is the AB hydrolase-1 domain. The Nucleophile role is filled by Ser-169. Position 239 (Arg-239) interacts with substrate. Catalysis depends on residues Asp-335 and His-368. Asp-369 contacts substrate.

This sequence belongs to the AB hydrolase superfamily. MetX family. In terms of assembly, homodimer.

Its subcellular location is the cytoplasm. It carries out the reaction L-homoserine + acetyl-CoA = O-acetyl-L-homoserine + CoA. The protein operates within amino-acid biosynthesis; L-methionine biosynthesis via de novo pathway; O-acetyl-L-homoserine from L-homoserine: step 1/1. Transfers an acetyl group from acetyl-CoA to L-homoserine, forming acetyl-L-homoserine. The protein is Homoserine O-acetyltransferase of Rhodopseudomonas palustris (strain HaA2).